Consider the following 416-residue polypeptide: 4-hydroxy-3-methylbut-2-en-1-yl diphosphate synthase (flavodoxin) (416 aa).

[4Fe-4S] cluster-binding residues include C304, C307, C350, and E357.

It belongs to the IspG family. [4Fe-4S] cluster is required as a cofactor.

It catalyses the reaction (2E)-4-hydroxy-3-methylbut-2-enyl diphosphate + oxidized [flavodoxin] + H2O + 2 H(+) = 2-C-methyl-D-erythritol 2,4-cyclic diphosphate + reduced [flavodoxin]. Its pathway is isoprenoid biosynthesis; isopentenyl diphosphate biosynthesis via DXP pathway; isopentenyl diphosphate from 1-deoxy-D-xylulose 5-phosphate: step 5/6. Its function is as follows. Converts 2C-methyl-D-erythritol 2,4-cyclodiphosphate (ME-2,4cPP) into 1-hydroxy-2-methyl-2-(E)-butenyl 4-diphosphate. The polypeptide is 4-hydroxy-3-methylbut-2-en-1-yl diphosphate synthase (flavodoxin) (Agrobacterium fabrum (strain C58 / ATCC 33970) (Agrobacterium tumefaciens (strain C58))).